Here is a 195-residue protein sequence, read N- to C-terminus: dITP/XTP pyrophosphatase (195 aa).

8 to 13 (TNNQGK) is a binding site for substrate. Mg(2+) is bound by residues Glu-39 and Asp-68. The active-site Proton acceptor is the Asp-68. Substrate-binding positions include Ser-69, 149–152 (FGYD), Lys-172, and 177–178 (HR).

It belongs to the HAM1 NTPase family. Homodimer. The cofactor is Mg(2+).

It catalyses the reaction XTP + H2O = XMP + diphosphate + H(+). The enzyme catalyses dITP + H2O = dIMP + diphosphate + H(+). The catalysed reaction is ITP + H2O = IMP + diphosphate + H(+). In terms of biological role, pyrophosphatase that catalyzes the hydrolysis of nucleoside triphosphates to their monophosphate derivatives, with a high preference for the non-canonical purine nucleotides XTP (xanthosine triphosphate), dITP (deoxyinosine triphosphate) and ITP. Seems to function as a house-cleaning enzyme that removes non-canonical purine nucleotides from the nucleotide pool, thus preventing their incorporation into DNA/RNA and avoiding chromosomal lesions. The polypeptide is dITP/XTP pyrophosphatase (Staphylococcus epidermidis (strain ATCC 12228 / FDA PCI 1200)).